We begin with the raw amino-acid sequence, 162 residues long: Non-specific lipid transfer protein GPI-anchored 27 (162 aa).

A signal peptide spans 1 to 29; it reads MAYTNKVAVAVGAAVVFLAVVMNPRWTEA. 4 disulfide bridges follow: Cys-39/Cys-78, Cys-50/Cys-62, Cys-63/Cys-102, and Cys-76/Cys-110. Asn-68 is a glycosylation site (N-linked (GlcNAc...) asparagine). Residues Asn-124 and Asn-135 are each glycosylated (N-linked (GlcNAc...) asparagine). The GPI-anchor amidated serine moiety is linked to residue Ser-137. Positions 138–162 are cleaved as a propeptide — removed in mature form; it reads VGGKNKVATSMSAFGLVAILLFVMF.

The protein belongs to the plant LTP family.

The protein localises to the cell membrane. In terms of biological role, probable lipid transfer protein. This chain is Non-specific lipid transfer protein GPI-anchored 27, found in Arabidopsis thaliana (Mouse-ear cress).